Consider the following 419-residue polypeptide: Tyrosine--tRNA ligase (419 aa).

Tyrosine 34 lines the L-tyrosine pocket. Residues 39 to 48 (PSGDSMHIGH) carry the 'HIGH' region motif. The L-tyrosine site is built by tyrosine 168 and glutamine 172. The 'KMSKS' region motif lies at 230–234 (KFGKS). Residue lysine 233 participates in ATP binding. Residues 352–418 (VNLVDWLVSL…GKKKYFLVSY (67 aa)) enclose the S4 RNA-binding domain.

The protein belongs to the class-I aminoacyl-tRNA synthetase family. TyrS type 1 subfamily. In terms of assembly, homodimer.

The protein localises to the cytoplasm. It catalyses the reaction tRNA(Tyr) + L-tyrosine + ATP = L-tyrosyl-tRNA(Tyr) + AMP + diphosphate + H(+). Functionally, catalyzes the attachment of tyrosine to tRNA(Tyr) in a two-step reaction: tyrosine is first activated by ATP to form Tyr-AMP and then transferred to the acceptor end of tRNA(Tyr). This chain is Tyrosine--tRNA ligase, found in Listeria welshimeri serovar 6b (strain ATCC 35897 / DSM 20650 / CCUG 15529 / CIP 8149 / NCTC 11857 / SLCC 5334 / V8).